Here is a 149-residue protein sequence, read N- to C-terminus: Arginine repressor (149 aa).

It belongs to the ArgR family.

The protein resides in the cytoplasm. Its pathway is amino-acid biosynthesis; L-arginine biosynthesis [regulation]. Functionally, regulates arginine biosynthesis genes. In Alkaliphilus metalliredigens (strain QYMF), this protein is Arginine repressor.